The chain runs to 360 residues: MKALILVGGYGTRLRPLTLSTPKPLVDFCNKPILLHQVEALAAAGVDHVILAVSYMSQVLEKEMKAQEQRLGIRISMSHEEEPLGTAGPLALARDLLSETADPFFVLNSDVICDFPFQAMVQFHRHHGQEGSILVTKVEEPSKYGVVVCEADTGRIHRFVEKPQVFVSNKINAGMYILSPAVLQRIQLQPTSIEKEVFPIMAKEGQLYAMELQGFWMDIGQPKDFLTGMCLFLQSLRQKQPERLCSGPGIVGNVLVDPSARIGQNCSIGPNVSLGPGVVVEDGVCIRRCTVLRDARIRSHSWLESCIVGWRCRVGQWVRMENVTVLGEDVIVNDELYLNGASVLPHKSIGESVPEPRIIM.

A substrate-binding domain region spans residues 2–222 (KALILVGGYG…QGFWMDIGQP (221 aa)). Position 110 (aspartate 110) interacts with GDP-alpha-D-mannose. Position 110 (aspartate 110) interacts with Mg(2+). Residue lysine 162 is part of the active site. Aspartate 218 is a binding site for GDP-alpha-D-mannose. Aspartate 218 lines the Mg(2+) pocket. Residues 245–360 (CSGPGIVGNV…ESVPEPRIIM (116 aa)) are hexapeptide repeat domain.

It belongs to the transferase hexapeptide repeat family. As to quaternary structure, component of the GMPPA-GMPPB mannose-1-phosphate guanylyltransferase complex composed of 4 GMPPA subunits and 8 GMPPB subunits; the complex is organized into three layers, a central layer made up of 2 GMPPA dimers sandwiched between two layers each made up of 2 GMPPB dimers. GMPPB catalytic activity is reduced when part of the complex and binding of GDP-alpha-D-Mannose by GMPPA induces allosteric feedback inhibition of GMPPB. Requires Mg(2+) as cofactor. As to expression, ubiquitously expressed, including in brain and skeletal muscle. Weakly expressed with highest expression in skeletal muscle, brain and gonads.

The protein localises to the cytoplasm. It carries out the reaction alpha-D-mannose 1-phosphate + GTP + H(+) = GDP-alpha-D-mannose + diphosphate. It participates in nucleotide-sugar biosynthesis; GDP-alpha-D-mannose biosynthesis; GDP-alpha-D-mannose from alpha-D-mannose 1-phosphate (GTP route): step 1/1. Its activity is regulated as follows. Enzyme activity is reduced by incorporation into the GMPPA-GMPPB mannose-1-phosphate guanylyltransferase complex. Allosterically inhibited, when part of the GMPPA-GMPPB complex, by GDP-alpha-D-mannose binding to GMPPA. In terms of biological role, catalytic subunit of the GMPPA-GMPPB mannose-1-phosphate guanylyltransferase complex. Catalyzes the formation of GDP-mannose, an essential precursor of glycan moieties of glycoproteins and glycolipids. Can catalyze the reverse reaction in vitro. Together with GMPPA regulates GDP-alpha-D-mannose levels. This is Mannose-1-phosphate guanylyltransferase catalytic subunit beta from Homo sapiens (Human).